Consider the following 181-residue polypeptide: Large ribosomal subunit protein uL5 (181 aa).

It belongs to the universal ribosomal protein uL5 family. Part of the 50S ribosomal subunit; part of the 5S rRNA/L5/L18/L25 subcomplex. Contacts the 5S rRNA and the P site tRNA. Forms a bridge to the 30S subunit in the 70S ribosome.

Functionally, this is one of the proteins that bind and probably mediate the attachment of the 5S RNA into the large ribosomal subunit, where it forms part of the central protuberance. In the 70S ribosome it contacts protein S13 of the 30S subunit (bridge B1b), connecting the 2 subunits; this bridge is implicated in subunit movement. Contacts the P site tRNA; the 5S rRNA and some of its associated proteins might help stabilize positioning of ribosome-bound tRNAs. The sequence is that of Large ribosomal subunit protein uL5 from Campylobacter jejuni subsp. doylei (strain ATCC BAA-1458 / RM4099 / 269.97).